A 275-amino-acid chain; its full sequence is Adenylate kinase 2 (275 aa).

A lipid anchor (N-myristoyl glycine) is attached at Gly-2. A required for cell membrane translocation but dispensable for cell membrane localization region spans residues 21-30; the sequence is KKKEKKKKKK. Residue 39–44 participates in ATP binding; it reads GSGKDT. Positions 59–97 are NMP; that stretch reads CISKLLKEYKEEYNKENVLNEEENYFDEIEKCMIDGSLV. AMP is bound by residues 95-97, 126-129, and Gln-133; these read SLV and GFPR. Arg-164 is a binding site for ATP. The tract at residues 165 to 214 is LID; it reads IIDPITNISYNENIIQIIKKKREGQELSDKEQKQLIIDNHLYNNLSNDIL. Positions 220 and 231 each coordinate AMP.

It belongs to the adenylate kinase family. Monomer. Oligomer. Heterodimer composed of NMT and AK2; AK2 myristoylation stabilizes the complex. In terms of processing, myristoylation is required for cell membrane localization. Post-translationally, may be palmitoylated at Cys-4 which stabilizes cell membrane localization of the myristoylated protein.

The protein resides in the parasitophorous vacuole membrane. The catalysed reaction is AMP + ATP = 2 ADP. Functionally, catalyzes the reversible transfer of the terminal phosphate group between ATP and AMP. Has very low activity with CTP, GTP, ITP and UTP and no activity with GMP, UMP or IMP in vitro. This is Adenylate kinase 2 from Plasmodium falciparum (isolate 3D7).